A 740-amino-acid chain; its full sequence is Ribosomal protein S6 kinase alpha-6 (740 aa).

The Protein kinase 1 domain occupies 67 to 326 (FELLKVLGQG…VEEIKRHTFF (260 aa)). Residues 73-81 (LGQGSFGKV) and lysine 99 each bind ATP. Catalysis depends on aspartate 192, which acts as the Proton acceptor. Residues 327–396 (STIDWNKLYR…VAPVSLEESK (70 aa)) enclose the AGC-kinase C-terminal domain. Residues 420–677 (YELKEDIGVG…AEQVLKHSWI (258 aa)) form the Protein kinase 2 domain. ATP is bound by residues 426 to 434 (IGVGSYSIC) and lysine 449. Aspartate 537 acts as the Proton acceptor in catalysis.

This sequence belongs to the protein kinase superfamily. AGC Ser/Thr protein kinase family. S6 kinase subfamily. In terms of assembly, forms a complex with either ERK1 or ERK2 in quiescent cells. Transiently dissociates following mitogenic stimulation. Mg(2+) serves as cofactor.

It catalyses the reaction L-seryl-[protein] + ATP = O-phospho-L-seryl-[protein] + ADP + H(+). The catalysed reaction is L-threonyl-[protein] + ATP = O-phospho-L-threonyl-[protein] + ADP + H(+). Its activity is regulated as follows. Activated by multiple phosphorylations on threonine and serine residues. Serine/threonine kinase that may play a role in mediating the growth-factor and stress induced activation of the transcription factor CREB. The polypeptide is Ribosomal protein S6 kinase alpha-6 (rps6ka6) (Danio rerio (Zebrafish)).